Here is a 232-residue protein sequence, read N- to C-terminus: Orotidine 5'-phosphate decarboxylase (232 aa).

Substrate is bound by residues aspartate 16, lysine 38, 65-74, threonine 119, arginine 180, glutamine 189, glycine 209, and arginine 210; that span reads DLKLHDIGNT. Lysine 67 acts as the Proton donor in catalysis.

It belongs to the OMP decarboxylase family. Type 1 subfamily. Homodimer.

The enzyme catalyses orotidine 5'-phosphate + H(+) = UMP + CO2. Its pathway is pyrimidine metabolism; UMP biosynthesis via de novo pathway; UMP from orotate: step 2/2. Functionally, catalyzes the decarboxylation of orotidine 5'-monophosphate (OMP) to uridine 5'-monophosphate (UMP). The sequence is that of Orotidine 5'-phosphate decarboxylase from Methylorubrum extorquens (strain PA1) (Methylobacterium extorquens).